The following is a 135-amino-acid chain: uncharacterized protein (135 aa).

The chain crosses the membrane as a helical span at residues 35-55 (VVLVLIGATIILVVISVLVVS).

It is found in the membrane. This is an uncharacterized protein from Saccharomyces cerevisiae (strain ATCC 204508 / S288c) (Baker's yeast).